Reading from the N-terminus, the 480-residue chain is MAAADALLGSLVTGLYDVQAFKFGNFVLKSGLSSPVYIDLRGIISRPSILNQVAEMLFQTAENAEINFDTVCGVPYTALPLATIVCSTHEIPMLIRRKEKKDYGTKRLIEGAVNPGDTCLIIEDVVSSGSSVWETAEVLQKEGLKVTDAVVLVDREQGGRDNLQARGIRLHSVCTLSTVLCILEQQKKINAETVERVKRFIQENAFVAANPNDSLPSVKKEPKELSFGARAELPGTHPVAAKLLRLMQKKETNLCLSADVSESRELLQLADALGSRICLLKIHVDILNDFTLDVMKELTTLAKRHEFLIFEDRKFADIGNTVKKQYEGGVFKIASWADLVNAHAVPGSGVVKGLEEVGLPLHRACLLVAEMSSAGTLATGSYTEAAVQMAEEHSEFVIGFISGSRVSMKPEFLHLTPGVQLEAGGDNLGQQYHSPQEVIGKRGSDIIIVGRGIIASANQLEAAKMYRKAAWEAYLSRLAV.

An N-acetylalanine modification is found at Ala2. Residues 2–214 form an OPRTase region; it reads AAADALLGSL…AFVAANPNDS (213 aa). Tyr37 is subject to Phosphotyrosine. The residue at position 214 (Ser214) is a Phosphoserine. Residues 215–220 form a domain linker region; the sequence is LPSVKK. Residues 221-480 form an OMPdecase region; sequence EPKELSFGAR…WEAYLSRLAV (260 aa). Ser257 serves as a coordination point for orotidine 5'-phosphate. UMP is bound by residues Ser257, Asp259, and 281-283; that span reads KIH. Orotidine 5'-phosphate-binding positions include Lys281, Lys314, Asp317, Thr321, Ser372, 430–432, and 450–451; these read QQY and GR. Catalysis depends on for OMPdecase activity residues Lys314 and Asp317. UMP-binding positions include Asp317, Thr321, Ser372, 430 to 432, and 450 to 451; these read QQY and GR.

In the N-terminal section; belongs to the purine/pyrimidine phosphoribosyltransferase family. It in the C-terminal section; belongs to the OMP decarboxylase family. As to quaternary structure, homodimer; dimerization is required for enzymatic activity.

The enzyme catalyses orotidine 5'-phosphate + diphosphate = orotate + 5-phospho-alpha-D-ribose 1-diphosphate. The catalysed reaction is orotidine 5'-phosphate + H(+) = UMP + CO2. It functions in the pathway pyrimidine metabolism; UMP biosynthesis via de novo pathway; UMP from orotate: step 1/2. The protein operates within pyrimidine metabolism; UMP biosynthesis via de novo pathway; UMP from orotate: step 2/2. Its function is as follows. Bifunctional enzyme catalyzing the last two steps of de novo pyrimidine biosynthesis, orotate phosphoribosyltransferase (OPRT), which converts orotate to orotidine-5'-monophosphate (OMP), and orotidine-5'-monophosphate decarboxylase (ODC), the terminal enzymatic reaction that decarboxylates OMP to uridine monophosphate (UMP). This chain is Uridine 5'-monophosphate synthase (UMPS), found in Bos taurus (Bovine).